Reading from the N-terminus, the 145-residue chain is MKLLLLLLVVMASDLPQAHGHLKQFTEMIKLTTGKNGLTSYGAYGCHCGVGGKGTPKDATDRCCVRHDCCYDRLMKRGCGTKFLNYRFTHKGSSITCSVKQNSCQKQLCECDKAAAYCFAANLKSYSRRYQFYYNGLCRGKTPSC.

The first 20 residues, 1-20 (MKLLLLLLVVMASDLPQAHG), serve as a signal peptide directing secretion. 7 cysteine pairs are disulfide-bonded: C46–C138, C48–C64, C63–C118, C69–C145, C70–C111, C79–C104, and C97–C109. Residues H47, G49, and G51 each coordinate Ca(2+). H67 is an active-site residue. D68 contributes to the Ca(2+) binding site. D112 is an active-site residue.

The protein belongs to the phospholipase A2 family. Ca(2+) serves as cofactor. As to expression, alveolar macrophages, and at much lower levels in peripheral blood monocytes and peritoneal macrophages.

Its subcellular location is the secreted. The protein resides in the cell membrane. It is found in the mitochondrion outer membrane. It carries out the reaction a 1,2-diacyl-sn-glycero-3-phosphoethanolamine + H2O = a 1-acyl-sn-glycero-3-phosphoethanolamine + a fatty acid + H(+). The enzyme catalyses 1-hexadecanoyl-2-(9Z-octadecenoyl)-sn-glycero-3-phosphoethanolamine + H2O = 1-hexadecanoyl-sn-glycero-3-phosphoethanolamine + (9Z)-octadecenoate + H(+). It catalyses the reaction 1-hexadecanoyl-2-(9Z,12Z-octadecadienoyl)-sn-glycero-3-phosphoethanolamine + H2O = 1-hexadecanoyl-sn-glycero-3-phosphoethanolamine + (9Z,12Z)-octadecadienoate + H(+). The catalysed reaction is 1-hexadecanoyl-2-(5Z,8Z,11Z,14Z-eicosatetraenoyl)-sn-glycero-3-phosphoethanolamine + H2O = 1-hexadecanoyl-sn-glycero-3-phosphoethanolamine + (5Z,8Z,11Z,14Z)-eicosatetraenoate + H(+). It carries out the reaction N-hexadecanoyl-1,2-di-(9Z-octadecenoyl)-sn-glycero-3-phosphoethanolamine + H2O = N-hexadecanoyl-1-(9Z-octadecenoyl)-sn-glycero-3-phosphoethanolamine + (9Z)-octadecenoate + H(+). The enzyme catalyses 1,2-dihexadecanoyl-sn-glycero-3-phospho-(1'-sn-glycerol) + H2O = 1-hexadecanoyl-sn-glycero-3-phospho-(1'-sn-glycerol) + hexadecanoate + H(+). It catalyses the reaction 1-hexadecanoyl-2-(9Z-octadecenoyl)-sn-glycero-3-phosphoglycerol + H2O = 1-hexadecanoyl-sn-glycero-3-phosphoglycerol + (9Z)-octadecenoate + H(+). The catalysed reaction is 1-hexadecanoyl-2-(9Z-octadecenoyl)-sn-glycero-3-phospho-(1'-sn-glycerol) + H2O = 1-hexadecanoyl-sn-glycero-3-phospho-(1'-sn-glycerol) + (9Z)-octadecenoate + H(+). It carries out the reaction a 1,2-diacyl-sn-glycero-3-phosphocholine + H2O = a 1-acyl-sn-glycero-3-phosphocholine + a fatty acid + H(+). The enzyme catalyses 1,2-dihexadecanoyl-sn-glycero-3-phosphocholine + H2O = 1-hexadecanoyl-sn-glycero-3-phosphocholine + hexadecanoate + H(+). It catalyses the reaction 1-hexadecanoyl-2-(9Z-octadecenoyl)-sn-glycero-3-phosphocholine + H2O = 1-hexadecanoyl-sn-glycero-3-phosphocholine + (9Z)-octadecenoate + H(+). The catalysed reaction is 1-hexadecanoyl-2-(9Z,12Z-octadecadienoyl)-sn-glycero-3-phosphocholine + H2O = (9Z,12Z)-octadecadienoate + 1-hexadecanoyl-sn-glycero-3-phosphocholine + H(+). It carries out the reaction 1-hexadecanoyl-2-(4Z,7Z,10Z,13Z,16Z,19Z-docosahexaenoyl)-sn-glycero-3-phosphocholine + H2O = (4Z,7Z,10Z,13Z,16Z,19Z)-docosahexaenoate + 1-hexadecanoyl-sn-glycero-3-phosphocholine + H(+). Secretory calcium-dependent phospholipase A2 that primarily targets extracellular phospholipids with implications in host antimicrobial defense, inflammatory response and tissue regeneration. Hydrolyzes the ester bond of the fatty acyl group attached at sn-2 position of phospholipids (phospholipase A2 activity) with preference for phosphatidylethanolamines and phosphatidylglycerols over phosphatidylcholines. Contributes to lipid remodeling of cellular membranes and generation of lipid mediators involved in pathogen clearance. Displays bactericidal activity against Gram-positive bacteria by directly hydrolyzing phospholipids of the bacterial membrane. Upon sterile inflammation, targets membrane phospholipids of extracellular mitochondria released from activated platelets, generating free unsaturated fatty acids such as arachidonate that is used by neighboring leukocytes to synthesize inflammatory eicosanoids such as leukotrienes. Simultaneously, by compromising mitochondrial membrane integrity, promotes the release in circulation of potent damage-associated molecular pattern molecules that activate the innate immune response. Plays a stem cell regulator role in the intestinal crypt. Within intracellular compartment mediates Paneth cell differentiation and its stem cell supporting functions by inhibiting Wnt signaling pathway in intestinal stem cell (ICS). Secreted in the intestinal lumen upon inflammation, acts in an autocrine way and promotes prostaglandin E2 synthesis that stimulates Wnt signaling pathway in ICS cells and tissue regeneration. May play a role in the biosynthesis of N-acyl ethanolamines that regulate energy metabolism and inflammation. Hydrolyzes N-acyl phosphatidylethanolamines to N-acyl lysophosphatidylethanolamines, which are further cleaved by a lysophospholipase D to release N-acyl ethanolamines. Independent of its catalytic activity, acts as a ligand for integrins. Binds to and activates integrins ITGAV:ITGB3, ITGA4:ITGB1 and ITGA5:ITGB1. Binds to a site (site 2) which is distinct from the classical ligand-binding site (site 1) and induces integrin conformational changes and enhanced ligand binding to site 1. Induces cell proliferation in an integrin-dependent manner. This Cavia porcellus (Guinea pig) protein is Phospholipase A2, membrane associated (PLA2G2A).